Here is a 195-residue protein sequence, read N- to C-terminus: Dephospho-CoA kinase (195 aa).

Residues 2–195 (IISLTGGIGV…DIVDSLNLNT (194 aa)) enclose the DPCK domain. An ATP-binding site is contributed by 10 to 15 (GVGKSF).

The protein belongs to the CoaE family.

Its subcellular location is the cytoplasm. The catalysed reaction is 3'-dephospho-CoA + ATP = ADP + CoA + H(+). Its pathway is cofactor biosynthesis; coenzyme A biosynthesis; CoA from (R)-pantothenate: step 5/5. Catalyzes the phosphorylation of the 3'-hydroxyl group of dephosphocoenzyme A to form coenzyme A. This is Dephospho-CoA kinase from Wolbachia pipientis wMel.